The chain runs to 1067 residues: Myocardin-related transcription factor B (1067 aa).

3 RPEL repeats span residues 46–71 (EVLQ…PPLK), 90–115 (NFLK…EETL), and 134–159 (DDLN…PVDL). 2 disordered regions span residues 175-223 (NLDT…NTTI) and 249-286 (PLSC…PRVK). 2 stretches are compositionally biased toward polar residues: residues 193–203 (QPASQESQGSA) and 212–223 (SDSSSPVSNTTI). Over residues 268–283 (KHTEKPRSKKSKDPKP) the composition is skewed to basic and acidic residues. The region spanning 390–424 (LDDMKVAELKMELKLRGLPVSGTKMDLIERLKPFQ) is the SAP domain. Residues 540-594 (GNTPNVELDAVEKDRKLQEKEKQIEELKRKLEQEQKLVEVLKKQLELEKRGQQQQ) are a coiled coil. The segment covering 799 to 819 (ISTSAQPQRSTQLTAVQNGPT) has biased composition (polar residues). The interval 799–829 (ISTSAQPQRSTQLTAVQNGPTSLHEKSSTPP) is disordered.

In terms of assembly, interacts with SRF.

The protein localises to the nucleus. Its function is as follows. Poor transcriptional factor which uses the canonical single or multiple CArG boxes DNA sequence. Acts as a cofactor of serum response factor (SRF) with the potential to modulate SRF target genes. The polypeptide is Myocardin-related transcription factor B (mrtfb) (Xenopus laevis (African clawed frog)).